A 494-amino-acid polypeptide reads, in one-letter code: Nuclear distribution protein PAC1 (494 aa).

In terms of domain architecture, LisH spans 14–46 (QKNELDKSVLRYLNWNYKQTVRHEHAQDYESVR). Positions 90-123 (NSIVRLQKKIIELEQNTETLVSQIKDLNTQVSEL) form a coiled coil. 7 WD repeats span residues 153–192 (NVESSVTSVKLHPNLPIVFVATDHGKLYAFDLFNYTIPLA), 196–244 (SHTK…CKFQ), 251–292 (GHEH…SLKT), 295–334 (PHSQWVRSIDVLGDYIISGSHDTTLRLTHWPSGNGLSVGT), 347–395 (HFIE…LMAH), 415–454 (GHLSWVRDISIRGQYLFSCADDKSVRCWDLNTGQCLHVWE), and 457–492 (HTGFVNSLDLDVDFDSNVTPRQMMVTGGLDCKSNVF).

This sequence belongs to the WD repeat LIS1/nudF family. Self-associates. Interacts with NDL1 and dynein.

It is found in the cytoplasm. The protein resides in the cytoskeleton. It localises to the spindle pole. In terms of biological role, positively regulates the activity of the minus-end directed microtubule motor protein dynein. Plays a central role in positioning the mitotic spindle at the bud neck during cell division. Targets cytoplasmic dynein to microtubule plus ends, thereby promoting dynein-mediated microtubule sliding along the bud cortex and consequently the movement of the mitotic spindle to the bud neck. In Saccharomyces cerevisiae (strain JAY291) (Baker's yeast), this protein is Nuclear distribution protein PAC1.